The sequence spans 157 residues: MSLKSVRTHFTQWNRENDVTEFETSSATVEQAAETIGVSLSRIAKSLSFRGEGDQVILIVAAGDAKIDNKKSRQTFGFKARMLSPNEVLEQTGHEIGGVCPFGLAHDPEVYLDVSLKRFQTVFPACGSRNSAIELTPKELSEFSFSKVWIDVCKDWE.

This is an uncharacterized protein from Bacillus subtilis (strain 168).